The sequence spans 484 residues: Glycogen synthase (484 aa).

Lysine 15 is a binding site for ADP-alpha-D-glucose.

The protein belongs to the glycosyltransferase 1 family. Bacterial/plant glycogen synthase subfamily.

The catalysed reaction is [(1-&gt;4)-alpha-D-glucosyl](n) + ADP-alpha-D-glucose = [(1-&gt;4)-alpha-D-glucosyl](n+1) + ADP + H(+). The protein operates within glycan biosynthesis; glycogen biosynthesis. In terms of biological role, synthesizes alpha-1,4-glucan chains using ADP-glucose. The protein is Glycogen synthase of Syntrophotalea carbinolica (strain DSM 2380 / NBRC 103641 / GraBd1) (Pelobacter carbinolicus).